We begin with the raw amino-acid sequence, 425 residues long: O-methyltransferase AMT9 (425 aa).

Residues 257–258, aspartate 280, 306–307, arginine 322, and arginine 323 each bind S-adenosyl-L-methionine; these read GG and DF. Histidine 326 acts as the Proton acceptor in catalysis.

Belongs to the class I-like SAM-binding methyltransferase superfamily. Cation-independent O-methyltransferase family.

Its pathway is mycotoxin biosynthesis. Its function is as follows. O-methyltransferase; part of the gene clusters that mediate the biosynthesis of AM-toxins, host-selective toxins (HSTs) causing Alternaria blotch on apple, a worldwide distributed disease. AM-toxins are cyclic depsipeptides containing the 3 residues 2-hydroxy-isovaleric acid (2-HIV), dehydroalanine, L-alanine which are common for all 3 AM-toxins I to III. The fourth precursor is L-alpha-amino-methoxyphenyl-valeric acid (L-Amv) for AM-toxin I, L-alpha-amino-phenyl-valeric acid (L-Apv) for AM-toxin II, and L-alpha-amino-hydroxyphenyl-valeric acid (L-Ahv) for AM-toxin III. AM-toxins have two target sites for affecting susceptible apple cells; they cause invagination of the plasma membrane and electrolyte loss and chloroplast disorganization. The non-ribosomal peptide synthetase AMT1 contains 4 catalytic modules and is responsible for activation of each residue in AM-toxin. The aldo-keto reductase AMT2 catalyzes the conversion of 2-keto-isovaleric acid (2-KIV) to 2-hydroxy-isovaleric acid (2-HIV), one of the precursor residues incorporated by AMT1 during AM-toxin biosynthesis, by reduction of its ketone to an alcohol. The cytochrome P450 monooxygenase AMT3 and the thioesterase AMT4 are also important for AM-toxin production, but their exact function within the AM-toxin biosynthesis are not known yet. Up to 21 proteins (including AMT1 to AMT4) are predicted to be involved in AM-toxin biosynthesis since their expression ishighly up-regulated in AM-toxin-producing cultures. The protein is O-methyltransferase AMT9 of Alternaria alternata (Alternaria rot fungus).